The chain runs to 158 residues: Ribosomal RNA large subunit methyltransferase H (158 aa).

S-adenosyl-L-methionine-binding positions include leucine 74, glycine 105, and 124–129 (LGPLTL).

It belongs to the RNA methyltransferase RlmH family. In terms of assembly, homodimer.

It is found in the cytoplasm. The enzyme catalyses pseudouridine(1915) in 23S rRNA + S-adenosyl-L-methionine = N(3)-methylpseudouridine(1915) in 23S rRNA + S-adenosyl-L-homocysteine + H(+). Its function is as follows. Specifically methylates the pseudouridine at position 1915 (m3Psi1915) in 23S rRNA. The sequence is that of Ribosomal RNA large subunit methyltransferase H from Xylella fastidiosa (strain Temecula1 / ATCC 700964).